The sequence spans 1861 residues: Amylopullulanase (1861 aa).

Positions 1 to 35 (MNKKLFTNRFISFNMSLLLVLTAVFSSIPLHSVHA) are cleaved as a signal peptide. Residues aspartate 248, asparagine 250, aspartate 288, aspartate 343, asparagine 401, aspartate 403, asparagine 406, aspartate 407, and aspartate 453 each coordinate Ca(2+). The substrate site is built by histidine 526 and arginine 626. The active-site Nucleophile is the aspartate 628. Glutamate 657 serves as the catalytic Proton donor. Residues 733–734 (HD), aspartate 793, and arginine 797 contribute to the substrate site. 2 Fibronectin type-III domains span residues 929–1021 (APQA…AYPI) and 1158–1252 (KPTA…VVPI). Positions 1246–1354 (KPDVVPIKVI…INDTVYRWRD (109 aa)) constitute a CBM20 domain. Residues 1448–1486 (QENNSGSGTGNNNTSTSGSNSSSTGSGSTGSTSITSNIS) are disordered. Positions 1450-1486 (NNSGSGTGNNNTSTSGSNSSSTGSGSTGSTSITSNIS) are enriched in low complexity. 3 SLH domains span residues 1677–1740 (EYDK…YSGE), 1741–1799 (FSDV…KEEN), and 1802–1861 (ATTF…SGNI).

This sequence belongs to the glycosyl hydrolase 13 family. Requires Ca(2+) as cofactor. Glycosylated.

Its subcellular location is the secreted. It is found in the cell wall. It carries out the reaction Endohydrolysis of (1-&gt;4)-alpha-D-glucosidic linkages in polysaccharides containing three or more (1-&gt;4)-alpha-linked D-glucose units.. The enzyme catalyses Hydrolysis of (1-&gt;6)-alpha-D-glucosidic linkages in pullulan, amylopectin and glycogen, and in the alpha- and beta-limit dextrins of amylopectin and glycogen.. This is Amylopullulanase (amyB) from Thermoanaerobacterium thermosulfurigenes (Clostridium thermosulfurogenes).